The primary structure comprises 861 residues: Probable beta-glucosidase A (861 aa).

An N-terminal signal peptide occupies residues 1–19 (MKLGWIEVAALAAASVVSA). Residues Asn-62, Asn-212, and Asn-253 are each glycosylated (N-linked (GlcNAc...) asparagine). Asp-281 is a catalytic residue. 10 N-linked (GlcNAc...) asparagine glycosylation sites follow: Asn-316, Asn-323, Asn-355, Asn-443, Asn-524, Asn-543, Asn-565, Asn-669, Asn-713, and Asn-846.

The protein belongs to the glycosyl hydrolase 3 family.

The protein resides in the secreted. The catalysed reaction is Hydrolysis of terminal, non-reducing beta-D-glucosyl residues with release of beta-D-glucose.. The protein operates within glycan metabolism; cellulose degradation. Functionally, beta-glucosidases are one of a number of cellulolytic enzymes involved in the degradation of cellulosic biomass. Catalyzes the last step releasing glucose from the inhibitory cellobiose. The polypeptide is Probable beta-glucosidase A (bglA) (Aspergillus flavus (strain ATCC 200026 / FGSC A1120 / IAM 13836 / NRRL 3357 / JCM 12722 / SRRC 167)).